The following is a 528-amino-acid chain: Coiled-coil domain-containing protein 116 (528 aa).

The disordered stretch occupies residues 43-68 (GHVPHPPSTCGSSALQNQRRNKRHPQ). A compositionally biased stretch (polar residues) spans 51–60 (TCGSSALQNQ). Residues 81 to 104 (HVLDSLETVVEKATERMAAMKTEA) adopt a coiled-coil conformation. Disordered regions lie at residues 335-444 (PLFP…RQRA) and 497-528 (SSSP…THHS). Polar residues predominate over residues 363–378 (PTNSGQPHPTVSSPKT). Ser-389 carries the post-translational modification Phosphoserine. The span at 419–429 (HSREKEPDSDP) shows a compositional bias: basic and acidic residues. The span at 434 to 443 (PPVSLSSRQR) shows a compositional bias: polar residues. Over residues 497-510 (SSSPSSLCPEVTSS) the composition is skewed to low complexity.

Its subcellular location is the cytoplasm. It is found in the cytoskeleton. The protein localises to the microtubule organizing center. It localises to the centrosome. This Macaca fascicularis (Crab-eating macaque) protein is Coiled-coil domain-containing protein 116 (CCDC116).